We begin with the raw amino-acid sequence, 320 residues long: RNA-binding protein Musashi homolog 1 (320 aa).

Low complexity predominate over residues 1–14 (MTTTVSTGATAVAT). Positions 1-48 (MTTTVSTGATAVATLRETSPPVDGHEEARLNADSDDGSHGSQDPGKMF) are disordered. The residue at position 18 (T18) is a Phosphothreonine. 2 positions are modified to phosphoserine: S19 and S34. Over residues 23 to 38 (DGHEEARLNADSDDGS) the composition is skewed to basic and acidic residues. RRM domains lie at 45–124 (GKMF…FPKR) and 134–211 (KKVF…KAQP). Required for binding to target mRNAs regions lie at residues 88 to 93 (FGFITF) and 177 to 182 (FGFVTF).

Belongs to the Musashi family. Expressed in the gut and in AVA, AFD, RMD, RMED, RMEV, RMER and RMEL neurons (at protein level). In the tail expressed in neurons and all the ray sensilla. Expressed in male specific C1-C4 neurons.

It is found in the cytoplasm. It localises to the perikaryon. Functionally, RNA binding protein that regulates the expression of target mRNAs at the translation level. Binds RNA containing the 5'-[GA]U(1-3)AGU-3' motif located in the 3' UTR of the target mRNA. Binds to the mRNA of three Arp2/3 complex components arx-1, arx-2 and arx-3 and negatively regulates their translation during association learning. Plays a role in time-dependent memory loss and the retention of conditioned behavior over time, probably through negative regulation of the Arp2/3 actin cytoskeleton branching complex and regulation of synapse size. Required for two aspects of male mating behavior: turning around the hermaphrodite head or tail and vulva location. In Caenorhabditis elegans, this protein is RNA-binding protein Musashi homolog 1.